The sequence spans 953 residues: MTAAENVCYTLINVPMDSEPPSEISLKNDLEKGDVKLKTEALKKVIIMILNGEKLPGLLMTIIRFVLPLQDHTIKKLLLVFWEIVPKTTPDGRLLQEMILVCDAYRKDLQHPNEFIRGSTLRFLCKLKEAELLEPLMPAIRACLEHRHSYVRRNAVLAIYTIYRNFEHLIPDAPELIHDFLVNEKDASCKRNAFMMLIHADQDRALDYLSTCIDQVQTFGDILQLVIVELIYKVCHANPSERARFIRCIYNLLQSSSPAVKYEAAGTLVTLSSAPTAIKAAAQCYIDLIIKESDNNVKLIVLDRLVELKEHPSHERVLQDLVMDILRVLSTPDLEVRKKTLQLALDLVSSRNVEELVIVLKKEVIKTNNVTEHEDTDKYRQLLVRTLHSCSVRFPDMAANVIPVLMEFLSDNNEAAAADVLEFVREAIQRFDNLRPLIVEKMLEVFHAIKSVKIYRGALWILGEYCSTKEDIQSVMTEVRRSLGEIPIVESEIKKEAGELKPEEEVTVGPVQKLVTEMGTYATQSALSSSRPTKKEEDRPPLRGFLLDGDFFVAASLATTLTKIALRYVSLVQEKKKQNSFIAEAMLLMATILHLGKSSLPKKPITDDDVDRISLCLKVLSECSPLMNDIFNKECRQSLSHMLSAKLEEEKLSQKKESEKRNVTVQPDDPISFMQLTAKNEMSSKEDQFQLSLLAAMGNTQRKEAADPLASKLNKVTQLTGFSDPVYAEAYVHVNQYDIVLDVLVVNQTSDTLQNCTLELATLGDLKLVEKPSPLTLAPHDFANIKANVKVASTENGIIFGNIVYDVSGAASDRNCVVLSDIHIDIMDYIQPASCTDAEFRQMWAEFEWENKVTVNTNIIDLNEYLQHILKSTNMKCLTPEKALSGYCGFMAANLYARSIFGEDALANVSIEKPIHLGPEAPVTGHIRIRAKSQGMALSLGDKINLSQKKTSL.

HEAT repeat units lie at residues 17–54 (DSEP…NGEK), 96–131 (QEMI…KEAE), 132–168 (LLEP…NFEH), 240–276 (SERA…SAPT), 277–314 (AIKA…HPSH), 316–353 (RVLQ…SRNV), and 396–433 (DMAA…RFDN).

As to quaternary structure, oligomeric complex that consists of at least the alpha, beta, beta', gamma, delta, epsilon and zeta subunits.

The protein resides in the cytoplasm. It localises to the golgi apparatus membrane. The protein localises to the cytoplasmic vesicle. Its subcellular location is the COPI-coated vesicle membrane. In terms of biological role, the coatomer is a cytosolic protein complex that binds to dilysine motifs and reversibly associates with Golgi non-clathrin-coated vesicles, which further mediate biosynthetic protein transport from the ER, via the Golgi up to the trans Golgi network. Coatomer complex is required for budding from Golgi membranes, and is essential for the retrograde Golgi-to-ER transport of dilysine-tagged proteins. The chain is Coatomer subunit beta (COPB1) from Gallus gallus (Chicken).